A 467-amino-acid chain; its full sequence is UTP--glucose-1-phosphate uridylyltransferase (467 aa).

UTP contacts are provided by residues 83–86, lysine 97, glutamine 160, and glycine 189; that span reads LNGG. 85 to 86 lines the substrate pocket; that stretch reads GG. Substrate contacts are provided by residues histidine 190 and 218–220; that span reads NSD. Residues aspartate 220 and lysine 358 each coordinate UTP.

The protein belongs to the UDPGP type 1 family.

The protein resides in the cytoplasm. The catalysed reaction is alpha-D-glucose 1-phosphate + UTP + H(+) = UDP-alpha-D-glucose + diphosphate. Plays a central role as a glucosyl donor in cellular metabolic pathways. The chain is UTP--glucose-1-phosphate uridylyltransferase (UGPA) from Musa acuminata (Banana).